A 697-amino-acid chain; its full sequence is Protein Niban 3 (697 aa).

Residues 1–48 (MGPDRKEVPLSRGTQAVVVGKGRGAPGDDSSMGGRPSSPLDKQQRQHL) form a disordered region.

Belongs to the Niban family. As to expression, specifically expressed in B-lymphocytes.

This chain is Protein Niban 3, found in Homo sapiens (Human).